A 144-amino-acid polypeptide reads, in one-letter code: Small ribosomal subunit protein eS10A (144 aa).

The segment at T90–Q144 is disordered. The segment covering G103–G126 has biased composition (basic and acidic residues).

Belongs to the eukaryotic ribosomal protein eS10 family. Component of the small ribosomal subunit (SSU). Mature yeast ribosomes consist of a small (40S) and a large (60S) subunit. The 40S small subunit contains 1 molecule of ribosomal RNA (18S rRNA) and at least 33 different proteins. The large 60S subunit contains 3 rRNA molecules (25S, 5.8S and 5S rRNA) and at least 46 different proteins. eS10 interacts with GCN1 (via middle region); this interaction is direct and promotes GCN2 kinase activity.

The protein resides in the cytoplasm. Component of the ribosome, a large ribonucleoprotein complex responsible for the synthesis of proteins in the cell. The small ribosomal subunit (SSU) binds messenger RNAs (mRNAs) and translates the encoded message by selecting cognate aminoacyl-transfer RNA (tRNA) molecules. The large subunit (LSU) contains the ribosomal catalytic site termed the peptidyl transferase center (PTC), which catalyzes the formation of peptide bonds, thereby polymerizing the amino acids delivered by tRNAs into a polypeptide chain. The nascent polypeptides leave the ribosome through a tunnel in the LSU and interact with protein factors that function in enzymatic processing, targeting, and the membrane insertion of nascent chains at the exit of the ribosomal tunnel. eS10 plays a role as a positive regulator of the GCN2 kinase activity by stimulating GCN1-mediated GCN2 activation. The chain is Small ribosomal subunit protein eS10A (rps1001) from Schizosaccharomyces pombe (strain 972 / ATCC 24843) (Fission yeast).